We begin with the raw amino-acid sequence, 197 residues long: Probable calcium-binding protein CML21 (197 aa).

Residues 1 to 33 (MLRPPPPSSVLTASAAAARPPASVVQPQRQAAH) form a disordered region. Low complexity predominate over residues 9–30 (SVLTASAAAARPPASVVQPQRQ). EF-hand domains follow at residues 37–72 (AETL…LGAR), 126–161 (EKEA…MGLP), and 164–197 (ACMA…AAGN). The Ca(2+) site is built by Asp-50, Asp-52, Asp-54, Glu-61, Asp-139, Asp-141, Asp-143, Tyr-145, Glu-150, Asp-177, Asp-179, Asp-181, Arg-183, and Glu-188.

Potential calcium sensor. This is Probable calcium-binding protein CML21 (CML21) from Oryza sativa subsp. japonica (Rice).